Here is a 482-residue protein sequence, read N- to C-terminus: Retinoic acid receptor beta (482 aa).

The interval 1-114 (MSTSSHACPV…PLPPPRVYKP (114 aa)) is modulating. S104 is subject to Phosphoserine. 2 consecutive NR C4-type zinc fingers follow at residues 115–135 (CFVCQDKSSGYHYGVSACEGC) and 151–175 (CHRDKNCVINKVTRNRCQYCRLQKC). The nuclear receptor DNA-binding region spans 115–180 (CFVCQDKSSG…RLQKCFEVGM (66 aa)). The segment at 181–209 (SKESVRNDRNKKKKEPSKQECTESYEMTA) is hinge. In terms of domain architecture, NR LBD spans 210–444 (ELDDLTEKIR…PLIQEMLENS (235 aa)). The segment at 443–482 (NSEGHEPLTPSSSGNIAEHSPSVSPSSVENSGVSQSPLLQ) is disordered. A compositionally biased stretch (low complexity) spans 462–482 (SPSVSPSSVENSGVSQSPLLQ).

The protein belongs to the nuclear hormone receptor family. NR1 subfamily. Homodimer. Heterodimer; with a RXR molecule. Binds DNA preferentially as a RAR/RXR heterodimer. Heterodimerizes (via NR LBD) with RXRA. Interacts weakly with NCOR2.

Its subcellular location is the nucleus. The protein localises to the cytoplasm. Functionally, receptor for retinoic acid. Retinoic acid receptors bind as heterodimers to their target response elements in response to their ligands, all-trans or 9-cis retinoic acid, and regulate gene expression in various biological processes. The RAR/RXR heterodimers bind to the retinoic acid response elements (RARE) composed of tandem 5'-AGGTCA-3' sites known as DR1-DR5. In the absence of ligand, acts mainly as an activator of gene expression due to weak binding to corepressors. The RXRA/RARB heterodimer can act as a repressor on the DR1 element and as an activator on the DR5 element. In concert with RARG, required for skeletal growth, matrix homeostasis and growth plate function. The chain is Retinoic acid receptor beta (Rarb) from Mus musculus (Mouse).